We begin with the raw amino-acid sequence, 520 residues long: Peptide chain release factor 3 (520 aa).

In terms of domain architecture, tr-type G spans 8–273; that stretch reads ESRKTFAIIS…AYVDHAPMPN (266 aa). Residues 17 to 24, 85 to 89, and 139 to 142 each bind GTP; these read SHPDAGKT, DTPGH, and NKLD.

Belongs to the TRAFAC class translation factor GTPase superfamily. Classic translation factor GTPase family. PrfC subfamily.

The protein localises to the cytoplasm. Functionally, increases the formation of ribosomal termination complexes and stimulates activities of RF-1 and RF-2. It binds guanine nucleotides and has strong preference for UGA stop codons. It may interact directly with the ribosome. The stimulation of RF-1 and RF-2 is significantly reduced by GTP and GDP, but not by GMP. This Staphylococcus carnosus (strain TM300) protein is Peptide chain release factor 3.